The sequence spans 275 residues: Phosphate import ATP-binding protein PstB (275 aa).

In terms of domain architecture, ABC transporter spans 28-270; the sequence is MSAKNVSVFY…PREERTKDYI (243 aa). 60 to 67 serves as a coordination point for ATP; it reads GPSGCGKS.

This sequence belongs to the ABC transporter superfamily. Phosphate importer (TC 3.A.1.7) family. The complex is composed of two ATP-binding proteins (PstB), two transmembrane proteins (PstC and PstA) and a solute-binding protein (PstS).

The protein resides in the cell inner membrane. It carries out the reaction phosphate(out) + ATP + H2O = ADP + 2 phosphate(in) + H(+). In terms of biological role, part of the ABC transporter complex PstSACB involved in phosphate import. Responsible for energy coupling to the transport system. This chain is Phosphate import ATP-binding protein PstB, found in Novosphingobium aromaticivorans (strain ATCC 700278 / DSM 12444 / CCUG 56034 / CIP 105152 / NBRC 16084 / F199).